Consider the following 435-residue polypeptide: 5-hydroxybenzimidazole synthase (435 aa).

Substrate is bound by residues M95, Y124, H163, 186–188 (SKG), 227–230 (NGLR), and E266. H270 contacts Zn(2+). Y293 contacts substrate. H334 lines the Zn(2+) pocket. Residues C410, C413, and C417 each coordinate [4Fe-4S] cluster.

The protein belongs to the ThiC family. 5-hydroxybenzimidazole synthase subfamily. In terms of assembly, homodimer. [4Fe-4S] cluster is required as a cofactor.

It catalyses the reaction 5-amino-1-(5-phospho-beta-D-ribosyl)imidazole + AH2 + S-adenosyl-L-methionine = 5-hydroxybenzimidazole + 5'-deoxyadenosine + formate + L-methionine + A + NH4(+) + phosphate + 2 H(+). In terms of biological role, catalyzes the conversion of aminoimidazole ribotide (AIR) to 5-hydroxybenzimidazole (5-HBI) in a radical S-adenosyl-L-methionine (SAM)-dependent reaction. Is thus involved in the anaerobic biosynthesis of the benzimidazole lower axial ligand of the cobamide produced by G.sulfurreducens. The polypeptide is 5-hydroxybenzimidazole synthase (Geobacter sulfurreducens (strain ATCC 51573 / DSM 12127 / PCA)).